The primary structure comprises 473 residues: Isocitrate dehydrogenase [NADP] (473 aa).

Residue Thr104 participates in NADP(+) binding. Residues Ser113, Asn115, Arg119, Arg129, and Arg153 each coordinate D-threo-isocitrate. Residue Asp362 coordinates Mg(2+). NADP(+) contacts are provided by residues 394 to 400, Asn407, Tyr446, and Arg450; that span reads HGTAPKH.

The protein belongs to the isocitrate and isopropylmalate dehydrogenases family. As to quaternary structure, homodimer. Mg(2+) serves as cofactor. It depends on Mn(2+) as a cofactor.

It carries out the reaction D-threo-isocitrate + NADP(+) = 2-oxoglutarate + CO2 + NADPH. With respect to regulation, inhibited by either oxaloacetate or glyoxylate. Also inhibited by the adenine nucleotides AMP, ADP and ATP and by NADPH, which inhibits the activity by 28% when it is added to the assay mixture at 0.25 mM. Catalyzes the oxidative decarboxylation of isocitrate to 2-oxoglutarate and carbon dioxide with the concomitant reduction of NADP(+). The chain is Isocitrate dehydrogenase [NADP] from Nostoc sp. (strain PCC 7120 / SAG 25.82 / UTEX 2576).